Consider the following 172-residue polypeptide: R-phycocyanin-2 beta chain (172 aa).

Asn-72 carries the post-translational modification N4-methylasparagine. (2R,3E)-phycocyanobilin is bound at residue Cys-82. Cys-153 contributes to the (2R,3E)-phycoerythrobilin binding site.

It belongs to the phycobiliprotein family. As to quaternary structure, heterodimer of an alpha and a beta chain. Post-translationally, contains two covalently linked bilin chromophores.

Its subcellular location is the cellular thylakoid membrane. In terms of biological role, light-harvesting photosynthetic bile pigment-protein from the phycobiliprotein complex. This is R-phycocyanin-2 beta chain (rpcB) from Synechococcus sp. (strain WH8103).